Consider the following 153-residue polypeptide: Transcription antitermination protein NusB (153 aa).

This sequence belongs to the NusB family.

Its function is as follows. Involved in transcription antitermination. Required for transcription of ribosomal RNA (rRNA) genes. Binds specifically to the boxA antiterminator sequence of the ribosomal RNA (rrn) operons. In Beutenbergia cavernae (strain ATCC BAA-8 / DSM 12333 / CCUG 43141 / JCM 11478 / NBRC 16432 / NCIMB 13614 / HKI 0122), this protein is Transcription antitermination protein NusB.